The following is a 452-amino-acid chain: MENNNNNNNNNNNNNNNNNNIVLLKCVSQNYEWGKYGSNSTVAKLLKGYAKECSDIIKETIPYAELWMGDHVSAPSKVEYKNKELKLREYIDTVQKEINEKSSTSSSSSSSIRGEIVEKRFGNDFPFLFKVLSIRTALSIQAHPDSQLAQVLFKKYPNIYKDPYHKPEIAIATTPFEALCSFRPLSEIQSFIDTIPEFKNSLPNNLIKLDDCKEYLKSIVTSLLKADGLLISNNLKELNNRLNEKREEERDDLDRLVLKLYSQYPGDVGVFFAYILNYIVLKPGEALFLGAGEPHAYISGDCVECMAPSDNVVRAGLTPKLKDVDTLGDMLTYRTGRPDLVVPQQRPDLSLTNYRCYQPPVDEFQVEYYHLDDCCKNINVYSSKGPSIVLVYSGNLSIENKSNQSTLNNLHTGSILFVPANTDYQFIQSDSSIPVSIYVASVSNRIFNKNNL.

Residues Gln141, His143, Glu168, and His295 each coordinate Zn(2+). Arg314 is a catalytic residue.

This sequence belongs to the mannose-6-phosphate isomerase type 1 family. The cofactor is Zn(2+).

The protein localises to the cytoplasm. The catalysed reaction is D-mannose 6-phosphate = D-fructose 6-phosphate. The protein operates within nucleotide-sugar biosynthesis; GDP-alpha-D-mannose biosynthesis; alpha-D-mannose 1-phosphate from D-fructose 6-phosphate: step 1/2. Involved in the synthesis of the GDP-mannose and dolichol-phosphate-mannose required for a number of critical mannosyl transfer reactions. This is Probable mannose-6-phosphate isomerase (mpi) from Dictyostelium discoideum (Social amoeba).